Consider the following 309-residue polypeptide: Calponin-2 (309 aa).

At serine 2 the chain carries N-acetylserine. N6-acetyllysine is present on residues lysine 8 and lysine 25. Residues 28 to 132 (PQKEAELRSW…SLLALAGKAK (105 aa)) enclose the Calponin-homology (CH) domain. Position 138 is a phosphoserine (serine 138). Calponin-like repeat units follow at residues 166-191 (IGLQ…RHLY), 206-231 (ISLQ…RHIY), and 245-269 (MSLQ…RQIY). The interval 273-309 (YCPQGPAADGAPAAAGDGPGPGEPSECPPYYQEEAGY) is disordered. Over residues 277 to 288 (GPAADGAPAAAG) the composition is skewed to low complexity.

It belongs to the calponin family.

Functionally, thin filament-associated protein that is implicated in the regulation and modulation of smooth muscle contraction. It is capable of binding to actin, calmodulin and tropomyosin. The interaction of calponin with actin inhibits the actomyosin Mg-ATPase activity. The protein is Calponin-2 (CNN2) of Bos taurus (Bovine).